Consider the following 146-residue polypeptide: UPF0260 protein SO_2573 (146 aa).

This sequence belongs to the UPF0260 family.

The sequence is that of UPF0260 protein SO_2573 from Shewanella oneidensis (strain ATCC 700550 / JCM 31522 / CIP 106686 / LMG 19005 / NCIMB 14063 / MR-1).